A 213-amino-acid chain; its full sequence is Orotate phosphoribosyltransferase (213 aa).

Lysine 26 is a 5-phospho-alpha-D-ribose 1-diphosphate binding site. 34–35 provides a ligand contact to orotate; that stretch reads FF. Residues 72–73, arginine 99, lysine 100, lysine 103, histidine 105, and 124–132 each bind 5-phospho-alpha-D-ribose 1-diphosphate; these read YK and DDVITAGTA. Orotate contacts are provided by threonine 128 and arginine 156.

This sequence belongs to the purine/pyrimidine phosphoribosyltransferase family. PyrE subfamily. As to quaternary structure, homodimer. Requires Mg(2+) as cofactor.

The enzyme catalyses orotidine 5'-phosphate + diphosphate = orotate + 5-phospho-alpha-D-ribose 1-diphosphate. It functions in the pathway pyrimidine metabolism; UMP biosynthesis via de novo pathway; UMP from orotate: step 1/2. Its function is as follows. Catalyzes the transfer of a ribosyl phosphate group from 5-phosphoribose 1-diphosphate to orotate, leading to the formation of orotidine monophosphate (OMP). The protein is Orotate phosphoribosyltransferase of Klebsiella pneumoniae (strain 342).